Here is a 218-residue protein sequence, read N- to C-terminus: Adenylate kinase (218 aa).

Gly10–Thr15 is a binding site for ATP. The NMP stretch occupies residues Ser30–Val59. AMP contacts are provided by residues Thr31, Arg36, Glu57–Val59, and Gln92. Residues Gly122 to Asp159 are LID. Residues Arg123 and Thr132–Tyr133 contribute to the ATP site. Arg156 and Arg167 together coordinate AMP. An ATP-binding site is contributed by Gln202.

This sequence belongs to the adenylate kinase family. As to quaternary structure, monomer.

The protein localises to the cytoplasm. The enzyme catalyses AMP + ATP = 2 ADP. The protein operates within purine metabolism; AMP biosynthesis via salvage pathway; AMP from ADP: step 1/1. Functionally, catalyzes the reversible transfer of the terminal phosphate group between ATP and AMP. Plays an important role in cellular energy homeostasis and in adenine nucleotide metabolism. The protein is Adenylate kinase of Francisella tularensis subsp. holarctica (strain LVS).